The chain runs to 198 residues: Ribonuclease HII (198 aa).

The RNase H type-2 domain maps to 10-198 (HLVAGVDEVG…PVRRALGIAS (189 aa)). The a divalent metal cation site is built by Asp-16, Glu-17, and Asp-108.

Belongs to the RNase HII family. The cofactor is Mn(2+). It depends on Mg(2+) as a cofactor.

Its subcellular location is the cytoplasm. It carries out the reaction Endonucleolytic cleavage to 5'-phosphomonoester.. Its function is as follows. Endonuclease that specifically degrades the RNA of RNA-DNA hybrids. This is Ribonuclease HII from Cronobacter sakazakii (strain ATCC BAA-894) (Enterobacter sakazakii).